A 48-amino-acid chain; its full sequence is Osteocalcin (48 aa).

One can recognise a Gla domain in the interval 1–44; it reads AGTAPADLTVAQLESLKEVCEANLACEHMMDVSGIIAAYTAYYG. Residues glutamate 14, glutamate 18, glutamate 21, and glutamate 27 each contribute to the Ca(2+) site. 4-carboxyglutamate occurs at positions 14, 18, and 21. The cysteines at positions 20 and 26 are disulfide-linked.

This sequence belongs to the osteocalcin/matrix Gla protein family. Post-translationally, gamma-carboxyglutamate residues are formed by vitamin K dependent carboxylation by GGCX. These residues are essential for the binding of calcium.

The protein resides in the secreted. Its subcellular location is the extracellular space. It localises to the extracellular matrix. The carboxylated form is one of the main organic components of the bone matrix, which constitutes 1-2% of the total bone protein. The carboxylated form binds strongly to apatite and calcium. This chain is Osteocalcin (bglap), found in Cyprinus carpio (Common carp).